Reading from the N-terminus, the 97-residue chain is Large ribosomal subunit protein bL27 (97 aa).

The propeptide occupies 1–12 (MIKLNLSNLQHF). Residues 13 to 38 (AHKKGGGSTSNGRDSQAKRLGAKAAD) form a disordered region.

The protein belongs to the bacterial ribosomal protein bL27 family. The N-terminus is cleaved by ribosomal processing cysteine protease Prp.

The chain is Large ribosomal subunit protein bL27 from Streptococcus equi subsp. equi (strain 4047).